A 495-amino-acid polypeptide reads, in one-letter code: Bifunctional protein GlmU (495 aa).

The segment at 1-241 (MTFPGDTAVL…SALVAGVNNR (241 aa)) is pyrophosphorylase. UDP-N-acetyl-alpha-D-glucosamine-binding positions include 12–15 (LAAG), Lys26, Gln83, 88–89 (GT), 112–114 (SGD), Gly151, Glu166, Asn181, and Asn239. Mg(2+) is bound at residue Asp114. Asn239 is a Mg(2+) binding site. The tract at residues 242–262 (VQLAQLASELNRRVVAAHQLA) is linker. The tract at residues 263–495 (GVTVVDPATT…TQPPDADQTP (233 aa)) is N-acetyltransferase. The UDP-N-acetyl-alpha-D-glucosamine site is built by Arg344 and Lys362. His374 acts as the Proton acceptor in catalysis. Residues Tyr377 and Asn388 each contribute to the UDP-N-acetyl-alpha-D-glucosamine site. Residues Ala391, 397–398 (NY), Ser416, and Ala434 contribute to the acetyl-CoA site. The segment at 457-495 (IENWVQRKRPGSPAAQASKRASEMACQQPTQPPDADQTP) is disordered. Residues 483–495 (QQPTQPPDADQTP) are compositionally biased toward low complexity.

In the N-terminal section; belongs to the N-acetylglucosamine-1-phosphate uridyltransferase family. The protein in the C-terminal section; belongs to the transferase hexapeptide repeat family. Homotrimer. Requires Mg(2+) as cofactor.

It is found in the cytoplasm. It catalyses the reaction alpha-D-glucosamine 1-phosphate + acetyl-CoA = N-acetyl-alpha-D-glucosamine 1-phosphate + CoA + H(+). It carries out the reaction N-acetyl-alpha-D-glucosamine 1-phosphate + UTP + H(+) = UDP-N-acetyl-alpha-D-glucosamine + diphosphate. The protein operates within nucleotide-sugar biosynthesis; UDP-N-acetyl-alpha-D-glucosamine biosynthesis; N-acetyl-alpha-D-glucosamine 1-phosphate from alpha-D-glucosamine 6-phosphate (route II): step 2/2. It participates in nucleotide-sugar biosynthesis; UDP-N-acetyl-alpha-D-glucosamine biosynthesis; UDP-N-acetyl-alpha-D-glucosamine from N-acetyl-alpha-D-glucosamine 1-phosphate: step 1/1. It functions in the pathway bacterial outer membrane biogenesis; LPS lipid A biosynthesis. In terms of biological role, catalyzes the last two sequential reactions in the de novo biosynthetic pathway for UDP-N-acetylglucosamine (UDP-GlcNAc). The C-terminal domain catalyzes the transfer of acetyl group from acetyl coenzyme A to glucosamine-1-phosphate (GlcN-1-P) to produce N-acetylglucosamine-1-phosphate (GlcNAc-1-P), which is converted into UDP-GlcNAc by the transfer of uridine 5-monophosphate (from uridine 5-triphosphate), a reaction catalyzed by the N-terminal domain. This is Bifunctional protein GlmU from Mycobacterium bovis (strain ATCC BAA-935 / AF2122/97).